Consider the following 247-residue polypeptide: PF03932 family protein CutC (247 aa).

Belongs to the CutC family.

The protein localises to the cytoplasm. This chain is PF03932 family protein CutC, found in Enterobacter sp. (strain 638).